A 124-amino-acid polypeptide reads, in one-letter code: Kinocilin (124 aa).

Helical transmembrane passes span 13 to 33 and 40 to 60; these read LQLACVALGLVAGSIIIGVSV and VGGIFLGAAGLGLLIFAYPFL. The interval 80–124 is disordered; that stretch reads PNSGPDHGEGRSSNNSNKEGARSGLSTVTRTLEKLKPGGRGTEEG. Residues 90–109 are compositionally biased toward polar residues; it reads RSSNNSNKEGARSGLSTVTR. Residues 110-124 show a composition bias toward basic and acidic residues; that stretch reads TLEKLKPGGRGTEEG.

As to expression, preferentially expressed in the inner ear and testis. Localizes mainly in the kinocilium of sensory cells in the inner ear. Also present in the manchette of the spermatids, a transient structure enriched in interconnected microtubules (at protein level).

It localises to the membrane. Functionally, may play a role in stabilizing dense microtubular networks or in vesicular trafficking. This is Kinocilin (Kncn) from Mus musculus (Mouse).